The primary structure comprises 80 residues: MASTRGYVNIKTFEQKLDGNKKIEGKEISVAFPLYSDVHKISGAHYQTFPSEKAAYSTVYEENQRTEWIAANEDLWKVTG.

Belongs to the Tevenvirinae Soc family. As to quaternary structure, homotrimer. Interacts with the major capsid protein; three soc molecules associate with each interface between the major capsid protein facets.

The protein resides in the virion. Capsid decoration protein which helps to stabilize the capsid against extremes of pH and temperature. Once maturation and expansion of the capsid has occured, trimers of soc attach the interfaces between the hexamer of the major capsid protein. Acts as a 'glue' between neighboring hexameric capsomers. Dispensable for the head morphogenesis and phage infection. This is Small outer capsid protein (soc) from Escherichia coli (Bacteriophage T4).